A 770-amino-acid chain; its full sequence is DEAD-box ATP-dependent RNA helicase 24 (770 aa).

Residues 1 to 106 form a disordered region; that stretch reads MSKRPKLGGF…ADSDDEDDPV (106 aa). The span at 14 to 26 shows a compositional bias: polar residues; that stretch reads RPTSYSFERSQPP. The segment covering 34 to 43 has biased composition (acidic residues); sequence DDPDLDDIAF. The span at 44–55 shows a compositional bias: low complexity; sequence SDDAAAPSDAPP. Residues 219–247 carry the Q motif motif; that stretch reads KSFADCGFPVQLMNAIAKQGYEKPTTIQC. A Helicase ATP-binding domain is found at 250–425; it reads LPIVLSGRDI…REILTDPIRV (176 aa). 263 to 270 is an ATP binding site; it reads AKTGSGKT. Residues 373-376 carry the DEAD box motif; it reads DEAD. The region spanning 436–599 is the Helicase C-terminal domain; the sequence is DIKQVVNVLP…DVPNELMDLA (164 aa). The segment covering 604 to 613 has biased composition (basic and acidic residues); sequence RFRANRDSRK. Disordered regions lie at residues 604–640, 683–704, and 729–770; these read RFRA…RGRG, VSAS…PSSF, and LPAP…GWDR. Residues 621–635 show a composition bias toward gly residues; that stretch reads GKGGGGGGGGGSGAR. Low complexity predominate over residues 683–697; sequence VSASSSNTPSNSAPS. Over residues 744-753 the composition is skewed to polar residues; sequence TVENANPNPE. The span at 754-770 shows a compositional bias: basic and acidic residues; that stretch reads SSRDRTRERKRPSGWDR.

This sequence belongs to the DEAD box helicase family.

The catalysed reaction is ATP + H2O = ADP + phosphate + H(+). This is DEAD-box ATP-dependent RNA helicase 24 from Oryza sativa subsp. japonica (Rice).